The following is a 206-amino-acid chain: Methylthioribulose-1-phosphate dehydratase (206 aa).

Zn(2+)-binding residues include H96 and H98.

This sequence belongs to the aldolase class II family. MtnB subfamily. Requires Zn(2+) as cofactor.

The enzyme catalyses 5-(methylsulfanyl)-D-ribulose 1-phosphate = 5-methylsulfanyl-2,3-dioxopentyl phosphate + H2O. It functions in the pathway amino-acid biosynthesis; L-methionine biosynthesis via salvage pathway; L-methionine from S-methyl-5-thio-alpha-D-ribose 1-phosphate: step 2/6. Catalyzes the dehydration of methylthioribulose-1-phosphate (MTRu-1-P) into 2,3-diketo-5-methylthiopentyl-1-phosphate (DK-MTP-1-P). This Azotobacter vinelandii (strain DJ / ATCC BAA-1303) protein is Methylthioribulose-1-phosphate dehydratase.